Consider the following 130-residue polypeptide: Type VII secretion system extracellular protein C (130 aa).

This sequence belongs to the EsxC family. In terms of assembly, forms both homodimers and heterodimers with EsxA. Homodimerization is calcium-dependent.

It localises to the secreted. Implements its pathogenic function during infection. This Staphylococcus aureus (strain Mu50 / ATCC 700699) protein is Type VII secretion system extracellular protein C.